We begin with the raw amino-acid sequence, 133 residues long: Small ribosomal subunit protein uS8 (133 aa).

Belongs to the universal ribosomal protein uS8 family. As to quaternary structure, part of the 30S ribosomal subunit. Contacts proteins S5 and S12.

Its function is as follows. One of the primary rRNA binding proteins, it binds directly to 16S rRNA central domain where it helps coordinate assembly of the platform of the 30S subunit. In Synechococcus sp. (strain RCC307), this protein is Small ribosomal subunit protein uS8.